We begin with the raw amino-acid sequence, 90 residues long: Small ribosomal subunit protein bS18 (90 aa).

Positions M1 to S23 are disordered. The segment covering T9–L21 has biased composition (polar residues).

Belongs to the bacterial ribosomal protein bS18 family. As to quaternary structure, part of the 30S ribosomal subunit. Forms a tight heterodimer with protein bS6.

In terms of biological role, binds as a heterodimer with protein bS6 to the central domain of the 16S rRNA, where it helps stabilize the platform of the 30S subunit. The polypeptide is Small ribosomal subunit protein bS18 (Chlorobium luteolum (strain DSM 273 / BCRC 81028 / 2530) (Pelodictyon luteolum)).